A 136-amino-acid chain; its full sequence is Holo-[acyl-carrier-protein] synthase (136 aa).

The Mg(2+) site is built by Asp-8 and Glu-58.

Belongs to the P-Pant transferase superfamily. AcpS family. Mg(2+) is required as a cofactor.

The protein localises to the cytoplasm. It carries out the reaction apo-[ACP] + CoA = holo-[ACP] + adenosine 3',5'-bisphosphate + H(+). Transfers the 4'-phosphopantetheine moiety from coenzyme A to a Ser of acyl-carrier-protein. This Leuconostoc mesenteroides subsp. mesenteroides (strain ATCC 8293 / DSM 20343 / BCRC 11652 / CCM 1803 / JCM 6124 / NCDO 523 / NBRC 100496 / NCIMB 8023 / NCTC 12954 / NRRL B-1118 / 37Y) protein is Holo-[acyl-carrier-protein] synthase.